The sequence spans 196 residues: Holliday junction branch migration complex subunit RuvA (196 aa).

A domain I region spans residues 1 to 63 (MYDYIKGKLS…DDAHLLFGFH (63 aa)). A domain II region spans residues 64–142 (TENEKEIFLN…EASGESATSR (79 aa)). Residues 143–148 (KVSSEQ) form a flexible linker region. The interval 148–196 (QNSNLEEAMEALLALGYKATELKKVKAFFEGTNETVEQYIKSSLKMLMK) is domain III.

The protein belongs to the RuvA family. In terms of assembly, homotetramer. Forms an RuvA(8)-RuvB(12)-Holliday junction (HJ) complex. HJ DNA is sandwiched between 2 RuvA tetramers; dsDNA enters through RuvA and exits via RuvB. An RuvB hexamer assembles on each DNA strand where it exits the tetramer. Each RuvB hexamer is contacted by two RuvA subunits (via domain III) on 2 adjacent RuvB subunits; this complex drives branch migration. In the full resolvosome a probable DNA-RuvA(4)-RuvB(12)-RuvC(2) complex forms which resolves the HJ.

The protein resides in the cytoplasm. Functionally, the RuvA-RuvB-RuvC complex processes Holliday junction (HJ) DNA during genetic recombination and DNA repair, while the RuvA-RuvB complex plays an important role in the rescue of blocked DNA replication forks via replication fork reversal (RFR). RuvA specifically binds to HJ cruciform DNA, conferring on it an open structure. The RuvB hexamer acts as an ATP-dependent pump, pulling dsDNA into and through the RuvAB complex. HJ branch migration allows RuvC to scan DNA until it finds its consensus sequence, where it cleaves and resolves the cruciform DNA. In Streptococcus agalactiae serotype Ia (strain ATCC 27591 / A909 / CDC SS700), this protein is Holliday junction branch migration complex subunit RuvA.